The sequence spans 142 residues: Acidic phospholipase A2 PA4 (142 aa).

Tryptophan 10, glycine 12, and glycine 14 together coordinate Ca(2+). Intrachain disulfides connect cysteine 11-cysteine 33, cysteine 32-cysteine 72, and cysteine 39-cysteine 65. Residue histidine 36 is part of the active site. A Ca(2+)-binding site is contributed by aspartate 37.

The protein belongs to the phospholipase A2 family. Group III subfamily. The cofactor is Ca(2+). As to expression, expressed by the venom gland.

It localises to the secreted. The catalysed reaction is a 1,2-diacyl-sn-glycero-3-phosphocholine + H2O = a 1-acyl-sn-glycero-3-phosphocholine + a fatty acid + H(+). In terms of biological role, PLA2 catalyzes the calcium-dependent hydrolysis of the 2-acyl groups in 3-sn-phosphoglycerides. This Heloderma suspectum (Gila monster) protein is Acidic phospholipase A2 PA4.